A 294-amino-acid chain; its full sequence is Homeobox protein HD1 (294 aa).

Residues 197–217 (ELKLELKQGFKSRIEDVREEI) form the ELK domain. Residues 218 to 281 (MRKRRAGKLP…NQRKRNWHNN (64 aa)) constitute a DNA-binding region (homeobox; TALE-type).

This sequence belongs to the TALE/KNOX homeobox family. In terms of tissue distribution, in roots, stems and cotyledons of one-week old seedlings. In mature plants, in young leaves from first level below flowers as well as in flower buds and open flowers.

Its subcellular location is the nucleus. Functionally, possible developmental regulator. In Brassica napus (Rape), this protein is Homeobox protein HD1 (HD1).